The primary structure comprises 474 residues: Coronin-1C (474 aa).

WD repeat units follow at residues 78–118, 128–168, 172–202, 215–249, and 263–303; these read GHTG…LTLS, GHSK…ALIN, MHSD…RVID, AHEG…ALWN, and DTSN…PYVH. A coiled-coil region spans residues 435-474; that stretch reads VQNEAKLDEILKEIKSIKETICSQDERISKLEQQLAKMAA. The residue at position 446 (K446) is an N6-acetyllysine.

This sequence belongs to the WD repeat coronin family. As to quaternary structure, homotrimer. Binds F-actin. Interacts with RCC2. Interacts preferentially with nucleotide-free and GDP-bound RAC1. Interacts with VIM (via head domain). Interacts with MICAL2; this interaction recruits MICAL2 to the actin filaments. In terms of tissue distribution, detected in skeletal muscle (at protein level). Detected in fibroblasts (at protein level). Ubiquitous.

It is found in the cell membrane. The protein resides in the cell projection. It localises to the lamellipodium. Its subcellular location is the ruffle membrane. The protein localises to the cytoplasm. It is found in the cytoskeleton. The protein resides in the cell cortex. It localises to the endosome membrane. Its function is as follows. Plays a role in directed cell migration by regulating the activation and subcellular location of RAC1. Increases the presence of activated RAC1 at the leading edge of migrating cells. Required for normal organization of the cytoskeleton, including the actin cytoskeleton, microtubules and the vimentin intermediate filaments. Required for normal cell proliferation, cell migration, and normal formation of lamellipodia. Plays a role in endoplasmic reticulum-associated endosome fission: localizes to endosome membrane tubules and promotes recruitment of TMCC1, leading to recruitment of the endoplasmic reticulum to endosome tubules for fission. Endosome membrane fission of early and late endosomes is essential to separate regions destined for lysosomal degradation from carriers to be recycled to the plasma membrane. Required for normal distribution of mitochondria within cells. The protein is Coronin-1C (Coro1c) of Mus musculus (Mouse).